We begin with the raw amino-acid sequence, 585 residues long: Aspartate--tRNA ligase (585 aa).

Glu173 contacts L-aspartate. The segment at 197–200 is aspartate; the sequence is QTLK. Arg219 is a binding site for L-aspartate. Residues 219–221 and Gln228 each bind ATP; that span reads RDE. His446 provides a ligand contact to L-aspartate. Glu480 contacts ATP. Arg487 serves as a coordination point for L-aspartate. An ATP-binding site is contributed by 532-535; that stretch reads GLDR.

The protein belongs to the class-II aminoacyl-tRNA synthetase family. Type 1 subfamily. Homodimer.

The protein localises to the cytoplasm. The catalysed reaction is tRNA(Asp) + L-aspartate + ATP = L-aspartyl-tRNA(Asp) + AMP + diphosphate. In terms of biological role, catalyzes the attachment of L-aspartate to tRNA(Asp) in a two-step reaction: L-aspartate is first activated by ATP to form Asp-AMP and then transferred to the acceptor end of tRNA(Asp). The chain is Aspartate--tRNA ligase from Bacteroides fragilis (strain ATCC 25285 / DSM 2151 / CCUG 4856 / JCM 11019 / LMG 10263 / NCTC 9343 / Onslow / VPI 2553 / EN-2).